We begin with the raw amino-acid sequence, 265 residues long: Diphthine synthase (265 aa).

S-adenosyl-L-methionine contacts are provided by residues Leu-9, Asp-85, Ile-88, 113-114 (TA), Leu-168, Ala-211, and His-236.

This sequence belongs to the diphthine synthase family. Homodimer.

The catalysed reaction is 2-[(3S)-amino-3-carboxypropyl]-L-histidyl-[translation elongation factor 2] + 3 S-adenosyl-L-methionine = diphthine-[translation elongation factor 2] + 3 S-adenosyl-L-homocysteine + 3 H(+). It participates in protein modification; peptidyl-diphthamide biosynthesis. Functionally, S-adenosyl-L-methionine-dependent methyltransferase that catalyzes the trimethylation of the amino group of the modified target histidine residue in translation elongation factor 2 (EF-2), to form an intermediate called diphthine. The three successive methylation reactions represent the second step of diphthamide biosynthesis. This Halorubrum lacusprofundi (strain ATCC 49239 / DSM 5036 / JCM 8891 / ACAM 34) protein is Diphthine synthase.